We begin with the raw amino-acid sequence, 890 residues long: MITTNEIRRSFLEYFEKNGHRIVPSAPLVPQNDPTLMFVNAGMVPFKNTFTGLESRPYKTATSSQKCVRAGGKHNDLDNVGYTARHHTFFEMLGNFSFGDYFKERVIELAWGLITKEWGLDPERLCVTVYHTDEEAFNLWRKIAGLPEDRIIKIATSDNFWSMGDTGPCGPCSEIFYDHGPEIPGGPPGSPDEDGDRFVEIWNLVFMQYEQVNAETRLNLPRPSIDTGMGLERIASVLQGVHDNYDTDTFKALIAASGELTHTATDGQFKASHRVIADHLRAAGFLVADGVLPANEGRGYVLRRIMRRAMRHAHLIGAKEPLMYRLVPALLSEMGMAYPELVRAKALIEETLRLEETRFRQTLANGLKILEDETQHLKSGDTLPGAVAFRLYDTYGFPYDLTADALRARNLTVDQAGFDAAMAEQRKAARAAWKGSGEKASDEIWFDIADQLGGTEFTGYTAEKGSGQIIALIKDGKRVETAKQGDDITIITNQTPFYGESGGQKGDIGVITGNNDLKMTVTDTQKPLGRIHAHIAKIEKGEIKIGDDIQLQVDINHRNRLRANHSATHLLHAALRDQLGQHVSQKGSMVSAERLRFDFSHQKALSDQELAAIEAEVNQQILNNSVVTTRLMTPESAVEAGAMALFGEKYGNEVRVLSMGSCLNDQNEESSWSVELCGGTHVSALGQIGLFHIVSETAVSSGIRRIEAVTGEEARLWLVGRDRLLRETASILKAVPEEVPTRTAAILDERRKSERALADAQKALALANANGGQGGNNAAPEKVGAYQFIGQVIEGLDPKALRGLIDENKKIIESGVIALITVNEGRASVAIGVSDSLKDKISAVDLVRKAVETLGGKGGGGRPDMAQGGGPNGNEAAQALEAVKALLEKA.

The Zn(2+) site is built by H565, H569, C677, and H681.

Belongs to the class-II aminoacyl-tRNA synthetase family. Zn(2+) serves as cofactor.

It localises to the cytoplasm. The enzyme catalyses tRNA(Ala) + L-alanine + ATP = L-alanyl-tRNA(Ala) + AMP + diphosphate. Functionally, catalyzes the attachment of alanine to tRNA(Ala) in a two-step reaction: alanine is first activated by ATP to form Ala-AMP and then transferred to the acceptor end of tRNA(Ala). Also edits incorrectly charged Ser-tRNA(Ala) and Gly-tRNA(Ala) via its editing domain. The protein is Alanine--tRNA ligase of Zymomonas mobilis subsp. mobilis (strain ATCC 31821 / ZM4 / CP4).